The primary structure comprises 289 residues: Tumor necrosis factor receptor superfamily member 5 (289 aa).

The first 19 residues, M1 to H19, serve as a signal peptide directing secretion. The Extracellular portion of the chain corresponds to L20–R193. 4 TNFR-Cys repeats span residues T25–H60, P61–C103, T104–H144, and P145–G187. 8 disulfide bridges follow: C26–C37, C38–C51, C41–C59, C62–C77, C83–C103, C105–C119, C111–C116, and C125–C143. Residue N153 is glycosylated (N-linked (GlcNAc...) asparagine). A helical membrane pass occupies residues A194–I215. Residues K216–V289 are Cytoplasmic-facing. The tract at residues L228 to P251 is disordered.

As to quaternary structure, monomer and homodimer. Interacts with TRAF1, TRAF2 and TRAF6. Interacts with TRAF3 and TRAF5. Interacts with TRAF6 and MAP3K8; the interaction is required for ERK activation.

The protein localises to the cell membrane. Its subcellular location is the secreted. Functionally, receptor for TNFSF5/CD40LG. Transduces TRAF6- and MAP3K8-mediated signals that activate ERK in macrophages and B cells, leading to induction of immunoglobulin secretion. In Mus musculus (Mouse), this protein is Tumor necrosis factor receptor superfamily member 5 (Cd40).